The chain runs to 77 residues: Putative antitoxin VapB24 (77 aa).

Its function is as follows. Possibly the antitoxin component of a type II toxin-antitoxin (TA) system. Its cognate toxin is VapC24 (Potential). The protein is Putative antitoxin VapB24 (vapB24) of Mycobacterium tuberculosis (strain CDC 1551 / Oshkosh).